The following is a 331-amino-acid chain: UDP-glucose 4-epimerase (331 aa).

NAD(+) contacts are provided by residues 11-12 (YI), 31-36 (DNLITG), 51-52 (DI), 73-77 (FAAFS), asparagine 92, threonine 117, tyrosine 141, lysine 145, and phenylalanine 169. Residues threonine 117 and tyrosine 141 each coordinate substrate. The Proton acceptor role is filled by tyrosine 141. Substrate-binding positions include asparagine 170, 189–190 (HI), 206–208 (QIY), arginine 221, and 282–285 (RAGD).

Belongs to the NAD(P)-dependent epimerase/dehydratase family. Homodimer. NAD(+) is required as a cofactor.

The enzyme catalyses UDP-alpha-D-glucose = UDP-alpha-D-galactose. Its pathway is carbohydrate metabolism; galactose metabolism. The protein is UDP-glucose 4-epimerase (galE) of Lacticaseibacillus casei (Lactobacillus casei).